Reading from the N-terminus, the 142-residue chain is MAKKSIGQLKLQVPAGAATPSPPIGPALGQRGINIMEFCKAFNAATQEMEKGAPIPVVITYYQDKSFTFSLKTPPVSFFLKKEAQLKSGSKEPGKVSVGSISRDKIRSIAESKMKDLNANDIEAAMRMVEGSARSMGLEVVG.

The protein belongs to the universal ribosomal protein uL11 family. Part of the ribosomal stalk of the 50S ribosomal subunit. Interacts with L10 and the large rRNA to form the base of the stalk. L10 forms an elongated spine to which L12 dimers bind in a sequential fashion forming a multimeric L10(L12)X complex. One or more lysine residues are methylated.

In terms of biological role, forms part of the ribosomal stalk which helps the ribosome interact with GTP-bound translation factors. In Bartonella tribocorum (strain CIP 105476 / IBS 506), this protein is Large ribosomal subunit protein uL11.